The chain runs to 237 residues: 1-(5-phosphoribosyl)-5-[(5-phosphoribosylamino)methylideneamino] imidazole-4-carboxamide isomerase (237 aa).

The active-site Proton acceptor is aspartate 8. Aspartate 127 acts as the Proton donor in catalysis.

It belongs to the HisA/HisF family.

It localises to the cytoplasm. It catalyses the reaction 1-(5-phospho-beta-D-ribosyl)-5-[(5-phospho-beta-D-ribosylamino)methylideneamino]imidazole-4-carboxamide = 5-[(5-phospho-1-deoxy-D-ribulos-1-ylimino)methylamino]-1-(5-phospho-beta-D-ribosyl)imidazole-4-carboxamide. The protein operates within amino-acid biosynthesis; L-histidine biosynthesis; L-histidine from 5-phospho-alpha-D-ribose 1-diphosphate: step 4/9. The sequence is that of 1-(5-phosphoribosyl)-5-[(5-phosphoribosylamino)methylideneamino] imidazole-4-carboxamide isomerase from Sulfurovum sp. (strain NBC37-1).